Consider the following 419-residue polypeptide: Divinyl chlorophyllide a 8-vinyl-reductase, chloroplastic (419 aa).

A chloroplast-targeting transit peptide spans 1–71 (MSICSTVGAG…PIVVSSTPVV (71 aa)).

It localises to the plastid. Its subcellular location is the chloroplast. The enzyme catalyses protochlorophyllide a + NADP(+) = 3,8-divinyl protochlorophyllide a + NADPH + H(+). It functions in the pathway porphyrin-containing compound metabolism; chlorophyll biosynthesis. In terms of biological role, catalyzes the conversion of divinyl chlorophyllide to monovinyl chlorophyllide. Reduces the 8-vinyl group of the tetrapyrrole to an ethyl group using NADPH as the reductant. The best substrate is (3,8-divinyl)-chlorophyllide a (DV-Chlidea). Very low activity with (3,8-divinyl)-protochlorophyllide a (DV-Pchlidea) and (3,8-divinyl)-magnesium-protoporphyrin IX monomethyl ester (DV-MPE). No activity with (3,8-divinyl)-magnesium-protoporphyrin IX (DV-Mg-Proto) and (3,8-divinyl)-chlorophyll a (DV-Chla). The chain is Divinyl chlorophyllide a 8-vinyl-reductase, chloroplastic (DVR) from Cucumis sativus (Cucumber).